Here is a 258-residue protein sequence, read N- to C-terminus: Small ribosomal subunit protein mS35 (258 aa).

A mitochondrion-targeting transit peptide spans 1-39 (MAFNPLLSLLKADAIFLGQLSKSSFCATSRAFSVFYFTR).

This sequence belongs to the mitochondrion-specific ribosomal protein mS35 family. Component of the mitochondrial small ribosomal subunit (mt-SSU). Mature yeast 74S mitochondrial ribosomes consist of a small (37S) and a large (54S) subunit. The 37S small subunit contains a 15S ribosomal RNA (15S mt-rRNA) and at least 32 different proteins. The 54S large subunit contains a 21S rRNA (21S mt-rRNA) and at least 45 different proteins.

Its subcellular location is the mitochondrion. Its function is as follows. Component of the mitochondrial ribosome (mitoribosome), a dedicated translation machinery responsible for the synthesis of mitochondrial genome-encoded proteins, including at least some of the essential transmembrane subunits of the mitochondrial respiratory chain. The mitoribosomes are attached to the mitochondrial inner membrane and translation products are cotranslationally integrated into the membrane. In Schizosaccharomyces pombe (strain 972 / ATCC 24843) (Fission yeast), this protein is Small ribosomal subunit protein mS35 (rsm24).